Consider the following 350-residue polypeptide: MGLSNVQLWTILLWALAWVQSTRSACPSCGAPTLTPQGERALVLELAKQQILEGLHLTSRPRITRPLPQAALTRALRRLQPRSMVPGNREKVISFATSIDKSTSTYRSVLTFQLSPLWSHHLYHARLWLHVPPSFPATLYLRIFGCGTTRCRGSRTFLAEHQTTSSGWHALTLPSSGLRSEESGVTKLQLEFRPLDLNSTTARLPRLLLDTAGQQRPFLELKIRANEPGAGRARRRTPTCESETPLCCRRDHYVDFQELGWRDWILQPEGYQLNYCSGQCPPHLAGSPGIAASFHSAVFSLLKANNPWPAGSSCCVPTARRPLSLLYLDHNGNVVKTDVPDMVVEACGCS.

The N-terminal stretch at 1 to 21 (MGLSNVQLWTILLWALAWVQS) is a signal peptide. The propeptide occupies 22–236 (TRSACPSCGA…EPGAGRARRR (215 aa)). N-linked (GlcNAc...) asparagine glycosylation occurs at N198. Disulfide bonds link C240/C248, C247/C315, C276/C347, and C280/C349.

Belongs to the TGF-beta family. Homodimeric or heterodimeric through association with alpha and beta subunits, linked by one or more disulfide bonds. Inhibins are heterodimers of one alpha and one beta subunit. Activins are homo- or heterodimers of beta subunits only.

It localises to the secreted. In terms of biological role, inhibins and activins inhibit and activate, respectively, the secretion of follitropin by the pituitary gland. Inhibins/activins are involved in regulating a number of diverse functions such as hypothalamic and pituitary hormone secretion, gonadal hormone secretion, germ cell development and maturation, erythroid differentiation, insulin secretion, nerve cell survival, embryonic axial development or bone growth, depending on their subunit composition. Inhibins appear to oppose the functions of activins. Functionally, activin E is a homodimer of INHBE secreted by the liver that plays a crucial role in regulating metabolic homeostasis particularly in lipid metabolism and energy homeostasis. Plays a central role in the regulation of adipose tissue lipolysis by preventing the influx of fatty acids from adipose tissue into the liver. Mechanistically, signals via ACVR1C to activate SMAD2/3 signaling, suppressing PPARG target genes in adipose tissue, thereby reducing liver lipid content and improving glycemic control. Induces beige adipocyte formation and thermogenesis in response to cold exposure. The protein is Inhibin beta E chain (Inhbe) of Rattus norvegicus (Rat).